Reading from the N-terminus, the 251-residue chain is Hydroxyacylglutathione hydrolase (251 aa).

Zn(2+) contacts are provided by His-53, His-55, Asp-57, His-58, His-110, Asp-127, and His-165.

It belongs to the metallo-beta-lactamase superfamily. Glyoxalase II family. Monomer. Zn(2+) is required as a cofactor.

The enzyme catalyses an S-(2-hydroxyacyl)glutathione + H2O = a 2-hydroxy carboxylate + glutathione + H(+). The protein operates within secondary metabolite metabolism; methylglyoxal degradation; (R)-lactate from methylglyoxal: step 2/2. Functionally, thiolesterase that catalyzes the hydrolysis of S-D-lactoyl-glutathione to form glutathione and D-lactic acid. This chain is Hydroxyacylglutathione hydrolase, found in Salmonella agona (strain SL483).